Here is a 176-residue protein sequence, read N- to C-terminus: Large ribosomal subunit protein uL6 (176 aa).

Belongs to the universal ribosomal protein uL6 family. In terms of assembly, part of the 50S ribosomal subunit.

In terms of biological role, this protein binds to the 23S rRNA, and is important in its secondary structure. It is located near the subunit interface in the base of the L7/L12 stalk, and near the tRNA binding site of the peptidyltransferase center. The chain is Large ribosomal subunit protein uL6 from Lactobacillus delbrueckii subsp. bulgaricus (strain ATCC 11842 / DSM 20081 / BCRC 10696 / JCM 1002 / NBRC 13953 / NCIMB 11778 / NCTC 12712 / WDCM 00102 / Lb 14).